A 422-amino-acid polypeptide reads, in one-letter code: UDP-N-acetylglucosamine 1-carboxyvinyltransferase (422 aa).

23–24 (KN) serves as a coordination point for phosphoenolpyruvate. Residue Arg-92 participates in UDP-N-acetyl-alpha-D-glucosamine binding. The Proton donor role is filled by Cys-116. Cys-116 is subject to 2-(S-cysteinyl)pyruvic acid O-phosphothioketal. UDP-N-acetyl-alpha-D-glucosamine contacts are provided by residues 121 to 125 (RPVDL), 161 to 164 (KVSV), Asp-306, and Ile-328.

The protein belongs to the EPSP synthase family. MurA subfamily.

The protein resides in the cytoplasm. The catalysed reaction is phosphoenolpyruvate + UDP-N-acetyl-alpha-D-glucosamine = UDP-N-acetyl-3-O-(1-carboxyvinyl)-alpha-D-glucosamine + phosphate. The protein operates within cell wall biogenesis; peptidoglycan biosynthesis. Functionally, cell wall formation. Adds enolpyruvyl to UDP-N-acetylglucosamine. The sequence is that of UDP-N-acetylglucosamine 1-carboxyvinyltransferase from Aliivibrio salmonicida (strain LFI1238) (Vibrio salmonicida (strain LFI1238)).